Here is a 910-residue protein sequence, read N- to C-terminus: Protein CHROMATIN REMODELING 25 (910 aa).

2 stretches are compositionally biased toward acidic residues: residues 1–18 and 26–39; these read MEEEDEEILSSSDCDDSS and QDSEGENDNPECED. The segment at 1–39 is disordered; that stretch reads MEEEDEEILSSSDCDDSSDSYKDDSQDSEGENDNPECED. The 174-residue stretch at 198 to 371 folds into the Helicase ATP-binding domain; it reads LHGSANINGC…FAMVNFTNPG (174 aa). An ATP-binding site is contributed by 211–218; the sequence is DDMGLGKT. Positions 322–325 match the DEAH box motif; it reads DEAH. The stretch at 396-417 forms a coiled coil; that stretch reads TEEEKNLAADRSAELSSKVNQF. A Helicase C-terminal domain is found at 538–696; that stretch reads VLSRLLANLR…QTDNSTRQGN (159 aa). The interval 828 to 861 is disordered; that stretch reads VSPKTVESEEHNRNQPVNKRAFNKPQQRPREPLQ.

It belongs to the SNF2/RAD54 helicase family. In terms of assembly, interacts with RAD51. Binds to the geminivirus mungbean yellow mosaic virus (MYMV) and to the tomato leaf curl virus (ToLCV) replication-associated proteins. As to expression, expressed ubiquitously, with the highest levels of expression in flower buds. Present in flower buds (at protein level).

It localises to the nucleus. In terms of biological role, dissociates RAD51 from nucleoprotein filaments formed on dsDNA. Could be involved in the turnover of RAD51 protein-dsDNA filaments. Addition of RAD54 overcomes inhibition of DNA strand exchange by RAD51 bound to substrate dsDNA. Species preference in the RAD51 dissociation and DNA strand exchange assays underlines the importance of specific RAD54-RAD51 interactions. RAD51 is unable to release dsDNA upon ATP hydrolysis, leaving it stuck on the heteroduplex DNA product after DNA strand exchange. Involved in DNA repair and mitotic recombination. Functions in the homologous recombinational DNA repair (RAD52) pathway. Required for synthesis-dependent strand annealing (SDSA) during double-strand break repair. Facilitates geminiviral replication (e.g. geminivirus mungbean yellow mosaic virus (MYMV) and tomato leaf curl virus (ToLCV)). This Arabidopsis thaliana (Mouse-ear cress) protein is Protein CHROMATIN REMODELING 25 (CHR25).